Consider the following 314-residue polypeptide: Versiconal hemiacetal acetate esterase (314 aa).

An Involved in the stabilization of the negatively charged intermediate by the formation of the oxyanion hole motif is present at residues 85–87 (HGG). Active-site residues include Ser154, Asp255, and His285.

The protein belongs to the 'GDXG' lipolytic enzyme family.

It carries out the reaction (2S,3S)-versiconal hemiacetal acetate + H2O = (2S-3S)-versiconal hemiacetal + acetate + H(+). The enzyme catalyses (3S)-versiconol acetate + H2O = (S)-versiconol + acetate + H(+). Its pathway is mycotoxin biosynthesis; aflatoxin biosynthesis. In terms of biological role, versiconal hemiacetal acetate esterase; part of the gene cluster that mediates the biosynthesis of aflatoxins, a group of polyketide-derived furanocoumarins, and part of the most toxic and carcinogenic compounds among the known mycotoxins. The four major aflatoxins produced by A.parasiticus are aflatoxin B1 (AFB1), aflatoxin B2 (AFB2), aflatoxin G1 (AFG1) and aflatoxin G2 (AFG2). Within the aflatoxin pathway, the versiconal hemiacetal acetate esterase aflJ converts versiconal hemiacetal acetate (VHA) into versiconal (VAL). The biosynthesis of aflatoxins begins with the norsolorinic acid synthase aflC that combines a hexanoyl starter unit produced by the fatty acid synthase aflA/aflB and 7 malonyl-CoA extender units to synthesize the precursor NOR. The second step is the conversion of NOR to averantin and requires the norsolorinic acid ketoreductase aflD, which catalyzes the dehydration of norsolorinic acid to form (1'S)-averantin. The norsolorinic acid reductases aflE and aflF may also play a role in the conversion of NOR to AVN. The cytochrome P450 monooxygenase aflG then catalyzes the hydroxylation of AVN to 5'hydroxyaverantin (HAVN). The next step is performed by the 5'-hydroxyaverantin dehydrogenase aflH that transforms HAVN to 5'-oxoaverantin (OAVN) which is further converted to averufin (AVF) by aflK that plays a dual role in the pathway, as a 5'-oxoaverantin cyclase that mediates conversion of 5'-oxoaverantin, as well as a versicolorin B synthase in a later step in the pathway. The averufin oxidase aflI catalyzes the conversion of AVF to versiconal hemiacetal acetate (VHA). VHA is then the substrate for the versiconal hemiacetal acetate esterase aflJ to yield versiconal (VAL). Versicolorin B synthase aflK then converts VAL to versicolorin B (VERB) by closing the bisfuran ring of aflatoxin which is required for DNA-binding, thus giving to aflatoxin its activity as a mutagen. Then, the activity of the versicolorin B desaturase aflL leads to versicolorin A (VERA). A branch point starts from VERB since it can also be converted to dihydrodemethylsterigmatocystin (DMDHST), probably also by aflL, VERA being a precursor for aflatoxins B1 and G1, and DMDHST for aflatoxins B2 and G2. Next, the versicolorin reductase aflM and the cytochrome P450 monooxygenase aflN are involved in conversion of VERA to demethylsterigmatocystin (DMST). AflX and aflY seem also involved in this step, through probable aflX-mediated epoxide ring-opening step following versicolorin A oxidation and aflY-mediated Baeyer-Villiger oxidation required for the formation of the xanthone ring. The methyltransferase aflO then leads to the modification of DMST to sterigmatocystin (ST), and of DMDHST to dihydrosterigmatocystin (DHST). Both ST and DHST are then substrates of the O-methyltransferase aflP to yield O-methylsterigmatocystin (OMST) and dihydro-O-methylsterigmatocystin (DHOMST), respectively. Finally OMST is converted to aflatoxins B1 and G1, and DHOMST to aflatoxins B2 and G2, via the action of several enzymes including O-methylsterigmatocystin oxidoreductase aflQ, the cytochrome P450 monooxygenase aflU, but also the NADH-dependent flavin oxidoreductase nadA which is specifically required for the synthesis of AFG1. In Aspergillus parasiticus (strain ATCC 56775 / NRRL 5862 / SRRC 143 / SU-1), this protein is Versiconal hemiacetal acetate esterase.